A 1055-amino-acid chain; its full sequence is Putative helicase/primase complex protein (1055 aa).

This sequence belongs to the asfivirus F1055L family.

In terms of biological role, may be involved in DNA replication. The polypeptide is Putative helicase/primase complex protein (Ornithodoros (relapsing fever ticks)).